A 692-amino-acid polypeptide reads, in one-letter code: Elongation factor G (692 aa).

Residues 8-282 (ENTRNIGIMA…AVIDYLPSPL (275 aa)) form the tr-type G domain. GTP contacts are provided by residues 17–24 (AHIDAGKT), 81–85 (DTPGH), and 135–138 (NKMD).

Belongs to the TRAFAC class translation factor GTPase superfamily. Classic translation factor GTPase family. EF-G/EF-2 subfamily.

Its subcellular location is the cytoplasm. In terms of biological role, catalyzes the GTP-dependent ribosomal translocation step during translation elongation. During this step, the ribosome changes from the pre-translocational (PRE) to the post-translocational (POST) state as the newly formed A-site-bound peptidyl-tRNA and P-site-bound deacylated tRNA move to the P and E sites, respectively. Catalyzes the coordinated movement of the two tRNA molecules, the mRNA and conformational changes in the ribosome. This chain is Elongation factor G, found in Bacillus cereus (strain ZK / E33L).